Consider the following 137-residue polypeptide: Large ribosomal subunit protein uL16 (137 aa).

This sequence belongs to the universal ribosomal protein uL16 family. Part of the 50S ribosomal subunit.

Its function is as follows. Binds 23S rRNA and is also seen to make contacts with the A and possibly P site tRNAs. This chain is Large ribosomal subunit protein uL16, found in Streptococcus suis (strain 98HAH33).